Consider the following 213-residue polypeptide: Outer-membrane lipoprotein carrier protein (213 aa).

The first 23 residues, 1–23 (MKKLLKQSLLGFALVSMTGAAFA), serve as a signal peptide directing secretion.

The protein belongs to the LolA family. In terms of assembly, monomer.

Its subcellular location is the periplasm. In terms of biological role, participates in the translocation of lipoproteins from the inner membrane to the outer membrane. Only forms a complex with a lipoprotein if the residue after the N-terminal Cys is not an aspartate (The Asp acts as a targeting signal to indicate that the lipoprotein should stay in the inner membrane). This is Outer-membrane lipoprotein carrier protein from Actinobacillus pleuropneumoniae serotype 7 (strain AP76).